The primary structure comprises 119 residues: Basic phospholipase A2 (119 aa).

Cystine bridges form between Cys-11–Cys-71, Cys-27–Cys-118, Cys-29–Cys-45, Cys-44–Cys-99, Cys-51–Cys-92, Cys-60–Cys-85, and Cys-78–Cys-90. 3 residues coordinate Ca(2+): Tyr-28, Gly-30, and Gly-32. Residue His-48 is part of the active site. Position 49 (Asp-49) interacts with Ca(2+). Asp-93 is an active-site residue.

This sequence belongs to the phospholipase A2 family. Group I subfamily. D49 sub-subfamily. It depends on Ca(2+) as a cofactor. As to expression, expressed by the venom gland.

It is found in the secreted. The catalysed reaction is a 1,2-diacyl-sn-glycero-3-phosphocholine + H2O = a 1-acyl-sn-glycero-3-phosphocholine + a fatty acid + H(+). Its function is as follows. Snake venom phospholipase A2 (PLA2) that has several activities. It is myotoxic, has weak anticoagulant activity and inhibits neuromuscular transmission by blocking acetylcholine release from the nerve termini. PLA2 catalyzes the calcium-dependent hydrolysis of the 2-acyl groups in 3-sn-phosphoglycerides. The sequence is that of Basic phospholipase A2 from Hydrophis schistosus (Beaked sea snake).